Reading from the N-terminus, the 444-residue chain is ATP-dependent RNA helicase sub2 (444 aa).

The Q motif signature appears at threonine 59–glutamine 87. The Helicase ATP-binding domain maps to isoleucine 90–isoleucine 265. ATP is bound at residue alanine 103–threonine 110. Residues aspartate 212 to aspartate 215 carry the DECD box motif. Residues glycine 277–alanine 438 enclose the Helicase C-terminal domain.

It belongs to the DEAD box helicase family. DECD subfamily.

It is found in the nucleus. It carries out the reaction ATP + H2O = ADP + phosphate + H(+). In terms of biological role, ATP-binding RNA helicase involved in transcription elongation and required for the export of mRNA out of the nucleus. SUB2 also plays a role in pre-mRNA splicing and spliceosome assembly. May be involved in rDNA and telomeric silencing, and maintenance of genome integrity. The polypeptide is ATP-dependent RNA helicase sub2 (sub2) (Sclerotinia sclerotiorum (strain ATCC 18683 / 1980 / Ss-1) (White mold)).